Consider the following 265-residue polypeptide: Proline-rich protein 23B (265 aa).

Positions 1–18 are enriched in low complexity; the sequence is MVSRPRSPSAFPAPWWGQ. Disordered stretches follow at residues 1–49 and 226–265; these read MVSR…EDPA and PSSPLQPLPPSPCVGSPGPHARSPLPERPPCKARRRLFQA. Over residues 226–237 the composition is skewed to pro residues; that stretch reads PSSPLQPLPPSP. The segment covering 256 to 265 has biased composition (basic residues); sequence CKARRRLFQA.

The protein belongs to the PRR23 family.

This Homo sapiens (Human) protein is Proline-rich protein 23B (PRR23B).